The sequence spans 228 residues: L-ribulose-5-phosphate 4-epimerase UlaF (228 aa).

Residues 26-27 (GN), 43-44 (SG), and 72-73 (SS) each bind substrate. Zn(2+) contacts are provided by Asp74, His93, and His95. Residue Asp118 is the Proton donor/acceptor of the active site. Position 167 (His167) interacts with Zn(2+). The active-site Proton donor/acceptor is the Tyr225.

It belongs to the aldolase class II family. AraD/FucA subfamily. The cofactor is Zn(2+).

The enzyme catalyses L-ribulose 5-phosphate = D-xylulose 5-phosphate. The protein operates within cofactor degradation; L-ascorbate degradation; D-xylulose 5-phosphate from L-ascorbate: step 4/4. Its function is as follows. Catalyzes the isomerization of L-ribulose 5-phosphate to D-xylulose 5-phosphate. Is involved in the anaerobic L-ascorbate utilization. This Escherichia coli (strain ATCC 8739 / DSM 1576 / NBRC 3972 / NCIMB 8545 / WDCM 00012 / Crooks) protein is L-ribulose-5-phosphate 4-epimerase UlaF.